A 623-amino-acid chain; its full sequence is Chaperone protein HtpG (623 aa).

The segment at 1 to 341 (MEKREFKAES…SQDLSLNISR (341 aa)) is a; substrate-binding. The interval 342-549 (EMLQHDRQLS…EGEVSIEMEK (208 aa)) is b. The c stretch occupies residues 550-623 (ILSAMPNNQG…FTNDICKLMK (74 aa)).

It belongs to the heat shock protein 90 family. In terms of assembly, homodimer.

Its subcellular location is the cytoplasm. Its function is as follows. Molecular chaperone. Has ATPase activity. This chain is Chaperone protein HtpG, found in Clostridium perfringens (strain 13 / Type A).